We begin with the raw amino-acid sequence, 549 residues long: MRLVLSSLIVIAGLLSSQATAATAPEQTASADIRDSGFVYCVSGQVNTFNPQKASSGLIVDTLAAQLYDRLLDVDPYTYRLVPELAESWEVLDNGATYRFHLRRDVSFQKTAWFTPTRKLNADDVVFTFQRIFDRRHPWHNINGSSFPYFDSLQFADNVKSVRKLDNNTVEFRLTQPDASFLWHLATHYASVMSAEYAAQLSRKDRQELLDRQPVGTGPFQLSEYRAGQFIRLQRHDGFWRGKPLMPQVVVDLGSGGTGRLSKLLTGECDVLAWPAASQLTILRDDPRLRLTLRPGMNIAYLAFNTDKPPLNNPAVRHALALSINNQRLMQSIYYGTAETAASILPRASWAYDNDAKITEYNPQKSREQLKALGIENLTLHLWVPTSSQAWNPSPLKTAELIQADMAQVGVKVVIVPVEGRFQEARLMDMNHDLTLSGWATDSNDPDSFFRPLLSCAAINSQTNFAHWCNPEFDSVLRKALSSQQLASRIEAYEEAQNILEKELPILPLASSLRLQAYRYDIKGLVLSPFGNASFAGVSREKHEEVKKP.

Residues 1 to 21 (MRLVLSSLIVIAGLLSSQATA) form the signal peptide.

This sequence belongs to the bacterial solute-binding protein 5 family.

The protein localises to the periplasm. Functionally, involved in a peptide intake transport system that plays a role in the resistance to antimicrobial peptides. The polypeptide is Peptide transport periplasmic protein SapA (Salmonella typhimurium (strain LT2 / SGSC1412 / ATCC 700720)).